Reading from the N-terminus, the 244-residue chain is Phosphoadenosine 5'-phosphosulfate reductase (244 aa).

Cys239 acts as the Nucleophile; cysteine thiosulfonate intermediate in catalysis.

It belongs to the PAPS reductase family. CysH subfamily.

The protein localises to the cytoplasm. The enzyme catalyses [thioredoxin]-disulfide + sulfite + adenosine 3',5'-bisphosphate + 2 H(+) = [thioredoxin]-dithiol + 3'-phosphoadenylyl sulfate. It functions in the pathway sulfur metabolism; hydrogen sulfide biosynthesis; sulfite from sulfate: step 3/3. In terms of biological role, catalyzes the formation of sulfite from phosphoadenosine 5'-phosphosulfate (PAPS) using thioredoxin as an electron donor. This Salmonella choleraesuis (strain SC-B67) protein is Phosphoadenosine 5'-phosphosulfate reductase.